The chain runs to 122 residues: Large ribosomal subunit protein uL14 (122 aa).

Belongs to the universal ribosomal protein uL14 family. Part of the 50S ribosomal subunit. Forms a cluster with proteins L3 and L19. In the 70S ribosome, L14 and L19 interact and together make contacts with the 16S rRNA in bridges B5 and B8.

Functionally, binds to 23S rRNA. Forms part of two intersubunit bridges in the 70S ribosome. The chain is Large ribosomal subunit protein uL14 from Brachyspira hyodysenteriae (strain ATCC 49526 / WA1).